The chain runs to 209 residues: Kynurenine formamidase (209 aa).

Phe-19 contacts substrate. His-49, His-53, and Asp-55 together coordinate Zn(2+). The active-site Proton donor/acceptor is the His-59. Residues His-160 and Glu-172 each contribute to the Zn(2+) site.

This sequence belongs to the Cyclase 1 superfamily. KynB family. As to quaternary structure, homodimer. Zn(2+) serves as cofactor.

It carries out the reaction N-formyl-L-kynurenine + H2O = L-kynurenine + formate + H(+). Its pathway is amino-acid degradation; L-tryptophan degradation via kynurenine pathway; L-kynurenine from L-tryptophan: step 2/2. Its function is as follows. Catalyzes the hydrolysis of N-formyl-L-kynurenine to L-kynurenine, the second step in the kynurenine pathway of tryptophan degradation. The polypeptide is Kynurenine formamidase (Delftia acidovorans (strain DSM 14801 / SPH-1)).